The chain runs to 184 residues: UPF0398 protein BCB4264_A1614 (184 aa).

It belongs to the UPF0398 family.

This Bacillus cereus (strain B4264) protein is UPF0398 protein BCB4264_A1614.